We begin with the raw amino-acid sequence, 800 residues long: Phenylalanine--tRNA ligase beta subunit (800 aa).

A tRNA-binding domain is found at 39–154 (TKEIKNLVVG…TEVKPGTDAL (116 aa)). The B5 domain occupies 408–483 (CFVTPIDISV…RIYGYDKIPS (76 aa)). Residues Asp-461, Asp-467, Glu-470, and Glu-471 each coordinate Mg(2+). Residues 708–800 (PRFPGVSRDI…ALKSEGATIR (93 aa)) form the FDX-ACB domain.

The protein belongs to the phenylalanyl-tRNA synthetase beta subunit family. Type 1 subfamily. In terms of assembly, tetramer of two alpha and two beta subunits. Requires Mg(2+) as cofactor.

The protein resides in the cytoplasm. It catalyses the reaction tRNA(Phe) + L-phenylalanine + ATP = L-phenylalanyl-tRNA(Phe) + AMP + diphosphate + H(+). The sequence is that of Phenylalanine--tRNA ligase beta subunit from Staphylococcus saprophyticus subsp. saprophyticus (strain ATCC 15305 / DSM 20229 / NCIMB 8711 / NCTC 7292 / S-41).